A 598-amino-acid polypeptide reads, in one-letter code: MWSTISISMNVAILKKPLNFLHNSNNKASNPRCVSSTRRRPSCPLQLDVEPRRSGNYQPSAWDFNYIQSLNNNHSKEERHLQGKAKLIEEVKMLLEQEMAAVQQLEFIEDLKNLGLSYLFQDEIKIILNSIYNHHKCFHNNHQQRTDENADLYFVALGFRLFRQHGFKVSQEVFDCFKNEEGSDFIPNLAEDTKGLLQLYEASYLVRQDEDTLEMARQFSTKILQKKVEEKMIEENLLSWTCHSLELPLHWRVQRIEAKWFLDAYASKPDMNPIIFELAKLEFNIAQALQQGELKDLSRWWNDTGIAEKLPFARDRIVEAHYWAIGTLEPYQYRYQRSLIAKIIALTTVVDDVYDVYGTLDEPQLFTDAIRRWDIESINQLPHYLQLCYLAIYNFVSELAYDIFRDKGFNSLPYLHKSWLDLVEAYFLEAKWFHSGYTPTLEEYLNNSKMTITCPAIVSEIYFAFANSIDKTEVESVYKYHDILYLSGMLLRLPDDLGTTTFEMKRGDVAKAIQCYMKEHNASEEEAREHIRFLMREAWKQMNTAAAANNCPFVNDFVVGAASLGRVANFVYVEGDGFGVQHSKIHQQMAELLFYPYQ.

A chloroplast-targeting transit peptide spans M1 to V34. Residues D351, D355, D495, T499, and E503 each coordinate Mg(2+). Positions D351–D355 match the DDXXD motif motif.

Belongs to the terpene synthase family. Requires Mg(2+) as cofactor. The cofactor is Mn(2+).

Its subcellular location is the plastid. The protein localises to the chloroplast. The catalysed reaction is (2E)-geranyl diphosphate + H2O = (1S,2S,4R)-endo-fenchol + diphosphate. Its pathway is secondary metabolite biosynthesis; terpenoid biosynthesis. Its function is as follows. Monoterpene synthase that catalyzes the formation of fenchol from geranyl diphosphate. In Ocimum basilicum (Sweet basil), this protein is (-)-endo-fenchol synthase, chloroplastic (FES).